The chain runs to 339 residues: Fructose-1,6-bisphosphatase, cytosolic (339 aa).

E70, E99, D120, L122, and D123 together coordinate Mg(2+). Substrate-binding positions include 123-126 (DGSS), N214, Y246, Y266, and K276. A Mg(2+)-binding site is contributed by E282.

The protein belongs to the FBPase class 1 family. Mg(2+) is required as a cofactor.

It localises to the cytoplasm. It catalyses the reaction beta-D-fructose 1,6-bisphosphate + H2O = beta-D-fructose 6-phosphate + phosphate. The protein is Fructose-1,6-bisphosphatase, cytosolic of Brassica napus (Rape).